The following is a 223-amino-acid chain: GTP cyclohydrolase 1 (223 aa).

Zn(2+)-binding residues include Cys111, His114, and Cys182.

The protein belongs to the GTP cyclohydrolase I family. As to quaternary structure, homomer.

It carries out the reaction GTP + H2O = 7,8-dihydroneopterin 3'-triphosphate + formate + H(+). Its pathway is cofactor biosynthesis; 7,8-dihydroneopterin triphosphate biosynthesis; 7,8-dihydroneopterin triphosphate from GTP: step 1/1. This chain is GTP cyclohydrolase 1, found in Flavobacterium johnsoniae (strain ATCC 17061 / DSM 2064 / JCM 8514 / BCRC 14874 / CCUG 350202 / NBRC 14942 / NCIMB 11054 / UW101) (Cytophaga johnsonae).